Here is a 132-residue protein sequence, read N- to C-terminus: Proline-rich protein sgp2 (132 aa).

The N-terminal stretch at 1–20 (MKYCFVFFVTLICLIANCSA) is a signal peptide. 2 disordered regions span residues 23-62 (EGDK…SNSR) and 87-132 (GASV…LGLP). A compositionally biased stretch (basic and acidic residues) spans 36–47 (KQIERASDKTSE). The span at 51–62 (GNTNAQGDSNSR) shows a compositional bias: polar residues. Residues 91–105 (PQLPDLPTTPSLPDM) are compositionally biased toward low complexity.

The protein resides in the secreted. In Glossina morsitans morsitans (Savannah tsetse fly), this protein is Proline-rich protein sgp2 (sgp2).